The following is a 513-amino-acid chain: Glucose-1-phosphate adenylyltransferase small subunit, chloroplastic/amyloplastic (513 aa).

Residues 1-64 (MAMAAAASPS…RRPFFFSPRA (64 aa)) constitute a chloroplast transit peptide.

It belongs to the bacterial/plant glucose-1-phosphate adenylyltransferase family. Heterotetramer. As to expression, leaves and starchy endosperm.

The protein resides in the plastid. Its subcellular location is the chloroplast. It is found in the amyloplast. It catalyses the reaction alpha-D-glucose 1-phosphate + ATP + H(+) = ADP-alpha-D-glucose + diphosphate. The protein operates within glycan biosynthesis; starch biosynthesis. Activated by 3'phosphoglycerate, inhibited by orthophosphate. Allosteric regulation. Its function is as follows. This protein plays a role in synthesis of starch. It catalyzes the synthesis of the activated glycosyl donor, ADP-glucose from Glc-1-P and ATP. This Hordeum vulgare (Barley) protein is Glucose-1-phosphate adenylyltransferase small subunit, chloroplastic/amyloplastic.